Here is a 396-residue protein sequence, read N- to C-terminus: Smad nuclear-interacting protein 1 (396 aa).

The span at 1-10 (MKAVKSERER) shows a compositional bias: basic and acidic residues. The disordered stretch occupies residues 1 to 227 (MKAVKSERER…VPAKEKPSFE (227 aa)). Residue Lys-30 forms a Glycyl lysine isopeptide (Lys-Gly) (interchain with G-Cter in SUMO); alternate linkage. A Glycyl lysine isopeptide (Lys-Gly) (interchain with G-Cter in SUMO1); alternate cross-link involves residue Lys-30. Lys-30 participates in a covalent cross-link: Glycyl lysine isopeptide (Lys-Gly) (interchain with G-Cter in SUMO2); alternate. Ser-35, Ser-49, Ser-52, and Ser-54 each carry phosphoserine. Thr-57 is subject to Phosphothreonine. Phosphoserine occurs at positions 58 and 99. The segment covering 77–105 (PPKKKNKASGRRSKSPRSKRNRSPHHSTV) has biased composition (basic residues). Basic and acidic residues predominate over residues 107 to 142 (VKQEREDHPRRGREDRQHREPSEQEHRRARNSDRDR). Lys-108 is covalently cross-linked (Glycyl lysine isopeptide (Lys-Gly) (interchain with G-Cter in SUMO2)). Ser-153 carries the phosphoserine modification. Residues 165-196 (RDRDTQNLQAQEEEREFYNARRREHRQRNDVG) adopt a coiled-coil conformation. Ser-202 bears the Phosphoserine mark. Over residues 213–225 (NKEKEVPAKEKPS) the composition is skewed to basic and acidic residues. A Glycyl lysine isopeptide (Lys-Gly) (interchain with G-Cter in SUMO2) cross-link involves residue Lys-223. The region spanning 281-344 (YLLGRHRRIA…NGTFLNNKRI (64 aa)) is the FHA domain. A compositionally biased stretch (basic and acidic residues) spans 373–382 (SSDTSEIDRK). Positions 373 to 396 (SSDTSEIDRKDDEDEEEEEEVSDS) are disordered. Over residues 383-396 (DDEDEEEEEEVSDS) the composition is skewed to acidic residues. The residue at position 394 (Ser-394) is a Phosphoserine.

As to quaternary structure, component of activated spliceosome complexes. Component of the minor spliceosome, which splices U12-type introns. Binds SMAD4 and CREBBP/EP300. Binds the SMAD1/OAZ1/PSMB4 complex. Interacts with DROSHA and SMARCA4. Component of the SNARP complex which consists at least of SNIP1, SNW1, THRAP3, BCLAF1 and PNN. Degraded by the proteasome upon binding to the SMAD1/OAZ1/PSMB4 complex. As to expression, ubiquitous, with highest expression in heart and skeletal muscle.

The protein resides in the nucleus. Functionally, required for pre-mRNA splicing as component of the spliceosome. As a component of the minor spliceosome, involved in the splicing of U12-type introns in pre-mRNAs. Down-regulates NF-kappa-B signaling by competing with RELA for CREBBP/EP300 binding. Involved in the microRNA (miRNA) biogenesis. May be involved in cyclin-D1/CCND1 mRNA stability through the SNARP complex which associates with both the 3'end of the CCND1 gene and its mRNA. This is Smad nuclear-interacting protein 1 (SNIP1) from Homo sapiens (Human).